A 251-amino-acid polypeptide reads, in one-letter code: Dihydroorotate dehydrogenase B (NAD(+)), electron transfer subunit homolog (251 aa).

Residues 2–101 (LAELNAEVLE…FLPLGKRLFS (100 aa)) form the FAD-binding FR-type domain. [2Fe-2S] cluster-binding residues include Cys217, Cys222, Cys225, and Cys238.

The protein belongs to the PyrK family. [2Fe-2S] cluster is required as a cofactor. FAD serves as cofactor.

The sequence is that of Dihydroorotate dehydrogenase B (NAD(+)), electron transfer subunit homolog from Aquifex aeolicus (strain VF5).